The primary structure comprises 161 residues: Allophycocyanin subunit alpha-B (161 aa).

Position 71 is an N4-methylasparagine (Asn-71). Cys-81 contacts (2R,3E)-phycocyanobilin.

Belongs to the phycobiliprotein family. Heterohexamer of two alpha chains, one alpha-B chain and three beta chains. Contains one covalently linked phycocyanobilin chromophore. The chromophore is added by phycocyanobilin lyase CpcS 1.

It localises to the cellular thylakoid membrane. In terms of biological role, light-harvesting photosynthetic bile pigment-protein from the phycobiliprotein complex. Allophycocyanin has a maximum absorption at approximately 654 nanometers. The chain is Allophycocyanin subunit alpha-B (apcD) from Nostoc sp. (strain PCC 7120 / SAG 25.82 / UTEX 2576).